A 210-amino-acid chain; its full sequence is Pyridoxine/pyridoxamine 5'-phosphate oxidase (210 aa).

Residues 7 to 10 (REDY) and lysine 65 contribute to the substrate site. FMN is bound by residues 60–65 (RMVLLK), 75–76 (FT), arginine 81, lysine 82, and glutamine 104. Residues tyrosine 122, arginine 126, and serine 130 each contribute to the substrate site. FMN-binding positions include 139–140 (QS) and tryptophan 183. Residue 189-191 (RLH) participates in substrate binding. Arginine 193 lines the FMN pocket.

The protein belongs to the pyridoxamine 5'-phosphate oxidase family. As to quaternary structure, homodimer. Requires FMN as cofactor.

It carries out the reaction pyridoxamine 5'-phosphate + O2 + H2O = pyridoxal 5'-phosphate + H2O2 + NH4(+). It catalyses the reaction pyridoxine 5'-phosphate + O2 = pyridoxal 5'-phosphate + H2O2. Its pathway is cofactor metabolism; pyridoxal 5'-phosphate salvage; pyridoxal 5'-phosphate from pyridoxamine 5'-phosphate: step 1/1. The protein operates within cofactor metabolism; pyridoxal 5'-phosphate salvage; pyridoxal 5'-phosphate from pyridoxine 5'-phosphate: step 1/1. Catalyzes the oxidation of either pyridoxine 5'-phosphate (PNP) or pyridoxamine 5'-phosphate (PMP) into pyridoxal 5'-phosphate (PLP). The polypeptide is Pyridoxine/pyridoxamine 5'-phosphate oxidase (Neisseria meningitidis serogroup C (strain 053442)).